An 86-amino-acid chain; its full sequence is Small ribosomal subunit protein bS16 (86 aa).

Belongs to the bacterial ribosomal protein bS16 family.

This Thermoanaerobacter sp. (strain X514) protein is Small ribosomal subunit protein bS16.